We begin with the raw amino-acid sequence, 422 residues long: Dihydroorotase (422 aa).

Zn(2+) contacts are provided by H59 and H61. Residues 61-63 (HFR) and N93 each bind substrate. The Zn(2+) site is built by D150, H177, and H230. A substrate-binding site is contributed by N276. Residue D303 participates in Zn(2+) binding. D303 is an active-site residue. Residue H307 participates in substrate binding.

It belongs to the metallo-dependent hydrolases superfamily. DHOase family. Class I DHOase subfamily. Zn(2+) is required as a cofactor.

It catalyses the reaction (S)-dihydroorotate + H2O = N-carbamoyl-L-aspartate + H(+). Its pathway is pyrimidine metabolism; UMP biosynthesis via de novo pathway; (S)-dihydroorotate from bicarbonate: step 3/3. In terms of biological role, catalyzes the reversible cyclization of carbamoyl aspartate to dihydroorotate. In Streptococcus thermophilus (strain CNRZ 1066), this protein is Dihydroorotase.